Reading from the N-terminus, the 41-residue chain is Large ribosomal subunit protein bL36 (41 aa).

The protein belongs to the bacterial ribosomal protein bL36 family.

In Opitutus terrae (strain DSM 11246 / JCM 15787 / PB90-1), this protein is Large ribosomal subunit protein bL36.